A 273-amino-acid polypeptide reads, in one-letter code: NAD-dependent protein deacetylase 2 (273 aa).

The region spanning 1 to 273 is the Deacetylase sirtuin-type domain; it reads MSNAPLANQS…RCEAALAFLL (273 aa). NAD(+) contacts are provided by residues 26-46 and 104-107; these read GAGC…GNWK and QNVD. The Proton acceptor role is filled by His-122. Zn(2+)-binding residues include Cys-130, Cys-133, Cys-181, and Cys-184. NAD(+)-binding positions include 221-223, 247-249, and Cys-265; these read GSS and NLG.

Belongs to the sirtuin family. Class II subfamily. Zn(2+) is required as a cofactor.

It is found in the cytoplasm. The enzyme catalyses N(6)-acetyl-L-lysyl-[protein] + NAD(+) + H2O = 2''-O-acetyl-ADP-D-ribose + nicotinamide + L-lysyl-[protein]. Its function is as follows. NAD-dependent protein deacetylase which modulates the activities of several enzymes which are inactive in their acetylated form. This Bradyrhizobium diazoefficiens (strain JCM 10833 / BCRC 13528 / IAM 13628 / NBRC 14792 / USDA 110) protein is NAD-dependent protein deacetylase 2.